Here is a 1068-residue protein sequence, read N- to C-terminus: Putative protein TIC 214 N-terminal part (1068 aa).

The next 6 helical transmembrane spans lie at 11-31 (VLWVPILSWINFSSTFFLFGI), 68-88 (ITGQLLIFLSIFYSPLYVLLI), 92-112 (LLTLLVLPYILFYWYKIKDLI), 131-151 (IFFDSFIFQLFNPVVLPSPVL), 166-186 (FIFLLSSFLGWCFGQFLFVSL), and 213-233 (FSIIILSFSLLHLSRAPVPFI).

Belongs to the TIC214 family. As to quaternary structure, part of the Tic complex.

The protein localises to the plastid. The protein resides in the chloroplast inner membrane. Functionally, involved in protein precursor import into chloroplasts. May be part of an intermediate translocation complex acting as a protein-conducting channel at the inner envelope. In Marchantia polymorpha (Common liverwort), this protein is Putative protein TIC 214 N-terminal part.